Here is a 289-residue protein sequence, read N- to C-terminus: Oxaloacetate decarboxylase (289 aa).

S47 contacts substrate. A Mg(2+)-binding site is contributed by D85. Positions 156 and 232 each coordinate substrate.

Belongs to the isocitrate lyase/PEP mutase superfamily. Oxaloacetate decarboxylase family. Homotetramer; dimer of dimers. The cofactor is Mg(2+).

It catalyses the reaction oxaloacetate + H(+) = pyruvate + CO2. Its function is as follows. Catalyzes the decarboxylation of oxaloacetate into pyruvate. Seems to play a role in maintaining cellular concentrations of bicarbonate and pyruvate. The polypeptide is Oxaloacetate decarboxylase (Rhodopseudomonas palustris (strain BisA53)).